The chain runs to 276 residues: NADPH-dependent 7-cyano-7-deazaguanine reductase (276 aa).

Residue I83–S85 coordinates substrate. An NADPH-binding site is contributed by S85–K86. The active-site Thioimide intermediate is the C184. D191 functions as the Proton donor in the catalytic mechanism. Residue H223–E224 participates in substrate binding. R252 to G253 lines the NADPH pocket.

Belongs to the GTP cyclohydrolase I family. QueF type 2 subfamily. As to quaternary structure, homodimer.

The protein localises to the cytoplasm. The catalysed reaction is 7-aminomethyl-7-carbaguanine + 2 NADP(+) = 7-cyano-7-deazaguanine + 2 NADPH + 3 H(+). It participates in tRNA modification; tRNA-queuosine biosynthesis. In terms of biological role, catalyzes the NADPH-dependent reduction of 7-cyano-7-deazaguanine (preQ0) to 7-aminomethyl-7-deazaguanine (preQ1). In Pseudomonas putida (strain ATCC 700007 / DSM 6899 / JCM 31910 / BCRC 17059 / LMG 24140 / F1), this protein is NADPH-dependent 7-cyano-7-deazaguanine reductase.